The sequence spans 331 residues: Probable allantoicase (331 aa).

Belongs to the allantoicase family.

It carries out the reaction allantoate + H2O = (S)-ureidoglycolate + urea. It participates in nitrogen metabolism; (S)-allantoin degradation; (S)-ureidoglycolate from allantoate (aminidohydrolase route): step 1/1. In Pseudomonas fluorescens (strain SBW25), this protein is Probable allantoicase.